Consider the following 359-residue polypeptide: 3-dehydroquinate synthase (359 aa).

Residues 105 to 109, 129 to 130, K142, K151, and 169 to 172 each bind NAD(+); these read GVVGD, TT, and TIKT. E184, H247, and H263 together coordinate Zn(2+).

Belongs to the sugar phosphate cyclases superfamily. Dehydroquinate synthase family. Co(2+) serves as cofactor. It depends on Zn(2+) as a cofactor. Requires NAD(+) as cofactor.

Its subcellular location is the cytoplasm. The enzyme catalyses 7-phospho-2-dehydro-3-deoxy-D-arabino-heptonate = 3-dehydroquinate + phosphate. It functions in the pathway metabolic intermediate biosynthesis; chorismate biosynthesis; chorismate from D-erythrose 4-phosphate and phosphoenolpyruvate: step 2/7. In terms of biological role, catalyzes the conversion of 3-deoxy-D-arabino-heptulosonate 7-phosphate (DAHP) to dehydroquinate (DHQ). The protein is 3-dehydroquinate synthase of Ruminiclostridium cellulolyticum (strain ATCC 35319 / DSM 5812 / JCM 6584 / H10) (Clostridium cellulolyticum).